Reading from the N-terminus, the 446-residue chain is Protein odr-4 homolog (446 aa).

A run of 2 helical transmembrane segments spans residues 81–101 (MLPGGLLVLSVFIIATPELSK) and 424–444 (MGVVIAVAVAVFASIFSFNYF).

This sequence belongs to the ODR-4 family.

The protein localises to the membrane. May play a role in the trafficking of a subset of G-protein coupled receptors. This is Protein odr-4 homolog (ODR4) from Gallus gallus (Chicken).